The chain runs to 63 residues: Large ribosomal subunit protein uL29 (63 aa).

The protein belongs to the universal ribosomal protein uL29 family.

The polypeptide is Large ribosomal subunit protein uL29 (Vibrio parahaemolyticus serotype O3:K6 (strain RIMD 2210633)).